Reading from the N-terminus, the 59-residue chain is Small ribosomal subunit protein eS30 (59 aa).

The tract at residues 1–35 (KVHGSLARAGKVRGQTPKVAKQEKKKKKTGRAKRR) is disordered. Basic residues predominate over residues 23–35 (EKKKKKTGRAKRR). Position 51 is an N6-succinyllysine (lysine 51).

It belongs to the eukaryotic ribosomal protein eS30 family.

This Mus spicilegus (Steppe mouse) protein is Small ribosomal subunit protein eS30 (Fau).